The primary structure comprises 79 residues: RNA-binding protein Hfq (79 aa).

A Sm domain is found at 10–69 (DPFLNALRKEHVPVSIYLVNGIKLQGNIESFDQYVVLLRNTVTQMVYKHAISTVVPARAV).

It belongs to the Hfq family. Homohexamer.

RNA chaperone that binds small regulatory RNA (sRNAs) and mRNAs to facilitate mRNA translational regulation in response to envelope stress, environmental stress and changes in metabolite concentrations. Also binds with high specificity to tRNAs. The sequence is that of RNA-binding protein Hfq from Cupriavidus metallidurans (strain ATCC 43123 / DSM 2839 / NBRC 102507 / CH34) (Ralstonia metallidurans).